A 333-amino-acid polypeptide reads, in one-letter code: PRKC apoptosis WT1 regulator protein (333 aa).

4 stretches are compositionally biased toward low complexity: residues 1–14 (MATG…STTT), 33–51 (PAGP…PAGS), 66–80 (GPAG…APGA), and 105–116 (PSAAAASGAPGS). The segment at 1–262 (MATGGYRSGG…ASFSSSSTLE (262 aa)) is disordered. The short motif at 62–66 (ELNHG) is the B30.2/SPRY domain-binding motif element. The Nuclear localization signal motif lies at 138 to 154 (RKGKGQIEKRKLREKRR). Residues 138–196 (RKGKGQIEKRKLREKRRSTGVVNIPAAECLDEYEDDEAGQKERKREDAITQQNTIQNEA) are selective for apoptosis induction in cancer cells (SAC). Position 156 is a phosphothreonine; by PKA (Thr-156). The span at 175-185 (AGQKERKREDA) shows a compositional bias: basic and acidic residues. Residues 186–196 (ITQQNTIQNEA) are compositionally biased toward polar residues. Phosphoserine is present on Ser-224. Basic and acidic residues predominate over residues 235-248 (PRTDRSGFSRHNRD). Positions 255 to 333 (FSSSSTLEKR…LLKVVGQLTR (79 aa)) form a coiled coil. Positions 293–333 (IGKLKEEIDLLNRDLDDMEDENEQLKQENKTLLKVVGQLTR) are leucine-zipper.

In terms of assembly, homooligomer. Interacts (via the C-terminal region) with WT1. Interacts with THAP1. Interacts with AATF. Interacts with BACE1. Interacts with SPSB1 (via B30.2/SPRY domain); this interaction is direct and occurs in association with the Elongin BC complex. Interacts with SPSB2 (via B30.2/SPRY domain); this interaction occurs in association with the Elongin BC complex. Interacts with SPSB4 (via B30.2/SPRY domain); this interaction occurs in association with the Elongin BC complex. Component of a ternary complex composed of SQSTM1 and PRKCZ. Interacts with actin. Preferentially phosphorylated at the Thr-156 by PKC in cancer cells.

It localises to the cytoplasm. Its subcellular location is the nucleus. Its function is as follows. Pro-apoptotic protein capable of selectively inducing apoptosis in cancer cells, sensitizing the cells to diverse apoptotic stimuli and causing regression of tumors in animal models. Induces apoptosis in certain cancer cells by activation of the Fas prodeath pathway and coparallel inhibition of NF-kappa-B transcriptional activity. Inhibits the transcriptional activation and augments the transcriptional repression mediated by WT1. Down-regulates the anti-apoptotic protein BCL2 via its interaction with WT1. Also seems to be a transcriptional repressor by itself. May be directly involved in regulating the amyloid precursor protein (APP) cleavage activity of BACE1. This is PRKC apoptosis WT1 regulator protein (Pawr) from Mus musculus (Mouse).